The sequence spans 94 residues: Co-chaperonin GroES (94 aa).

This sequence belongs to the GroES chaperonin family. In terms of assembly, heptamer of 7 subunits arranged in a ring. Interacts with the chaperonin GroEL.

It localises to the cytoplasm. Functionally, together with the chaperonin GroEL, plays an essential role in assisting protein folding. The GroEL-GroES system forms a nano-cage that allows encapsulation of the non-native substrate proteins and provides a physical environment optimized to promote and accelerate protein folding. GroES binds to the apical surface of the GroEL ring, thereby capping the opening of the GroEL channel. In Lactobacillus gasseri (strain ATCC 33323 / DSM 20243 / BCRC 14619 / CIP 102991 / JCM 1131 / KCTC 3163 / NCIMB 11718 / NCTC 13722 / AM63), this protein is Co-chaperonin GroES.